The primary structure comprises 499 residues: Glycerol kinase (499 aa).

Thr-12 provides a ligand contact to ADP. ATP contacts are provided by Thr-12, Thr-13, and Ser-14. Residue Thr-12 coordinates sn-glycerol 3-phosphate. Arg-16 provides a ligand contact to ADP. Sn-glycerol 3-phosphate is bound by residues Arg-82, Glu-83, Tyr-134, and Asp-245. Glycerol-binding residues include Arg-82, Glu-83, Tyr-134, Asp-245, and Gln-246. ADP is bound by residues Thr-267 and Gly-311. ATP is bound by residues Thr-267, Gly-311, Gln-315, and Gly-412. ADP is bound by residues Gly-412 and Asn-416.

Belongs to the FGGY kinase family.

It carries out the reaction glycerol + ATP = sn-glycerol 3-phosphate + ADP + H(+). It functions in the pathway polyol metabolism; glycerol degradation via glycerol kinase pathway; sn-glycerol 3-phosphate from glycerol: step 1/1. Its activity is regulated as follows. Inhibited by fructose 1,6-bisphosphate (FBP). Key enzyme in the regulation of glycerol uptake and metabolism. Catalyzes the phosphorylation of glycerol to yield sn-glycerol 3-phosphate. The chain is Glycerol kinase from Brucella anthropi (strain ATCC 49188 / DSM 6882 / CCUG 24695 / JCM 21032 / LMG 3331 / NBRC 15819 / NCTC 12168 / Alc 37) (Ochrobactrum anthropi).